Reading from the N-terminus, the 487-residue chain is Serine carboxypeptidase-like 37 (487 aa).

Positions 1-28 are cleaved as a signal peptide; it reads MVKQQDWSVTTCVLLFLFLASQIHCRSG. N-linked (GlcNAc...) asparagine glycosylation is present at Asn-105. Disulfide bonds link Cys-120/Cys-368, Cys-280/Cys-291, and Cys-315/Cys-336. Ser-215 is a catalytic residue. Residues Asn-317, Asn-357, and Asn-375 are each glycosylated (N-linked (GlcNAc...) asparagine). The active site involves Asp-407. N-linked (GlcNAc...) asparagine glycosylation is found at Asn-423 and Asn-449. His-460 is a catalytic residue.

This sequence belongs to the peptidase S10 family. As to expression, expressed in seedlings, roots, leaves, stems, flowers and siliques.

It localises to the secreted. In terms of biological role, probable carboxypeptidase. The protein is Serine carboxypeptidase-like 37 (SCPL37) of Arabidopsis thaliana (Mouse-ear cress).